Reading from the N-terminus, the 902-residue chain is Chitin synthase 3 (902 aa).

Residues 1-15 are compositionally biased toward basic and acidic residues; it reads MAYNRLDDDYFDNRR. Positions 1–68 are disordered; the sequence is MAYNRLDDDY…MGPGRHTPSD (68 aa). A compositionally biased stretch (pro residues) spans 19–30; the sequence is NRPPPHRTPSPG. An N-linked (GlcNAc...) asparagine glycan is attached at asparagine 80. The segment at 104-161 is disordered; it reads HHDAYYNPTYTPTPNEAQTPYGEPGYEHDGRPLLPQQDSYGQYSDNPQQQQQQQGGLK. 2 stretches are compositionally biased toward polar residues: residues 111–121 and 139–150; these read PTYTPTPNEAQ and QQDSYGQYSDNP. Transmembrane regions (helical) follow at residues 449-469, 547-567, 577-597, 623-643, 656-676, 699-719, 731-751, 830-850, and 874-894; these read SAFG…YIAL, RWLN…YQFF, IAFF…WFAI, ILGV…FVLA, LAMI…AVFI, VVVT…VASL, LVQY…YAFC, VVVL…LSTA, and VVLY…MWFL.

Belongs to the chitin synthase family. Class II subfamily.

The protein localises to the cell membrane. It catalyses the reaction [(1-&gt;4)-N-acetyl-beta-D-glucosaminyl](n) + UDP-N-acetyl-alpha-D-glucosamine = [(1-&gt;4)-N-acetyl-beta-D-glucosaminyl](n+1) + UDP + H(+). In terms of biological role, polymerizes chitin, a structural polymer of the cell wall and septum, by transferring the sugar moiety of UDP-GlcNAc to the non-reducing end of the growing chitin polymer. CHS1 and CHS3 have compensatory functions in cell wall modifications in responses to stresses. Might function as a negative regulator on expression of other CHS genes. The protein is Chitin synthase 3 of Pyricularia oryzae (strain 70-15 / ATCC MYA-4617 / FGSC 8958) (Rice blast fungus).